A 204-amino-acid polypeptide reads, in one-letter code: VQ motif-containing protein 13 (204 aa).

A compositionally biased stretch (basic and acidic residues) spans 1–12; that stretch reads MEKSPRYRDKAK. Residues 1 to 26 are disordered; it reads MEKSPRYRDKAKNLLPSPSSCTTTPT. The segment covering 16–26 has biased composition (low complexity); it reads PSPSSCTTTPT. S17 bears the Phosphoserine mark. Residues 46–55 carry the VQ motif; sequence FKQVVQLLTG. The segment at 56–90 is disordered; the sequence is IPKNPTHQPDPRFPPFHSIPPIKAVTNKKQSSSFR. 2 positions are modified to phosphoserine: S73 and S128. Phosphothreonine is present on T131. The segment at 133 to 204 is disordered; it reads LMSDPFYRPG…HSPAPSPHDH (72 aa). Residues 143–152 show a composition bias toward low complexity; the sequence is SFSQSPSDSK. 2 positions are modified to phosphoserine: S147 and S173. 2 positions are modified to phosphothreonine: T177 and T192. Phosphoserine occurs at positions 196 and 200.

Phosphorylated on serine and threonine residues by MPK6.

It localises to the nucleus. Functionally, may modulate WRKY transcription factor activities. The polypeptide is VQ motif-containing protein 13 (Arabidopsis thaliana (Mouse-ear cress)).